Here is a 90-residue protein sequence, read N- to C-terminus: MVRIRLTRMGKKKQPFYRIVVVDQKKKRDGAYVESLGYYNPLKEPYEVKVDIDRAVEWMLKGAQPSETVSKLLGKLGLYEKLEEAKSKKA.

It belongs to the bacterial ribosomal protein bS16 family.

The sequence is that of Small ribosomal subunit protein bS16 from Fervidobacterium nodosum (strain ATCC 35602 / DSM 5306 / Rt17-B1).